Here is a 420-residue protein sequence, read N- to C-terminus: Nucleobindin-2 (420 aa).

Positions 1–24 (MRWRTILLQYCFLLITCLLTALEA) are cleaved as a signal peptide. The DNA-binding element occupies 171 to 223 (KTRHEEFKKYEMMKEHERREYLKTLNEEKRKEEESKFEEMKKKHENHPKVNHP). Positions 195–212 (LNEEKRKEEESKFEEMKK) are enriched in basic and acidic residues. The tract at residues 195-225 (LNEEKRKEEESKFEEMKKKHENHPKVNHPGS) is disordered. The tract at residues 213–420 (KHENHPKVNH…AGELKFEPHI (208 aa)) is binds to necdin. 2 consecutive EF-hand domains span residues 241–276 (PNDF…ELEK) and 293–328 (ERLR…KEFL). Ca(2+) contacts are provided by Asp-254 and Asn-256. Residue Ser-257 is modified to Phosphoserine. 6 residues coordinate Ca(2+): Asp-258, Glu-265, Asp-306, Asn-308, Asp-310, and Glu-317. Positions 304–334 (EVDTNKDRLVTLEEFLKATEKKEFLEPDSWE) match the GBA motif. Residue Ser-332 is modified to Phosphoserine. The disordered stretch occupies residues 398 to 420 (QKKLQQGIPPSGPAGELKFEPHI).

This sequence belongs to the nucleobindin family. In terms of assembly, interacts (via GBA motif) with guanine nucleotide-binding protein G(i) alpha subunit GNAI3. Preferentially interacts with inactive rather than active GNAI3. Interaction with GNAI3 is inhibited when NUCB2 binds calcium, probably due to a conformational change which renders the GBA motif inaccessible. Binds to the postmitotic growth suppressor NDN; coexpression abolishes NUCB2 secretion. Interacts with MC4R. As to expression, predominantly expressed in spleen, testis and normal stomach.

The protein resides in the golgi apparatus. The protein localises to the membrane. It localises to the cytoplasm. It is found in the secreted. Its subcellular location is the endoplasmic reticulum. The protein resides in the nucleus envelope. In terms of biological role, calcium-binding protein which may have a role in calcium homeostasis. Acts as a non-receptor guanine nucleotide exchange factor which binds to and activates guanine nucleotide-binding protein (G-protein) alpha subunit GNAI3. Functionally, anorexigenic peptide, seems to play an important role in hypothalamic pathways regulating food intake and energy homeostasis, acting in a leptin-independent manner. May also exert hypertensive roles and modulate blood pressure through directly acting on peripheral arterial resistance. In intestinal epithelial cells, plays a role in the inhibition of hepatic glucose production via MC4R receptor leading to increased cyclic adenosine monophosphate (cAMP) levels and glucagon-like peptide 1 (GLP-1) secretion. The chain is Nucleobindin-2 from Homo sapiens (Human).